The following is a 787-amino-acid chain: Phenylalanine--tRNA ligase beta subunit (787 aa).

The tRNA-binding domain maps to 39–149 (APAFSGVVVA…EDAPVGTNIR (111 aa)). Residues 400-475 (PEAKQVGLRL…RVYGYENIPD (76 aa)) form the B5 domain. 4 residues coordinate Mg(2+): D453, D459, E462, and E463. The FDX-ACB domain occupies 694-786 (SKFQPVRRDL…VATEAGARLR (93 aa)).

It belongs to the phenylalanyl-tRNA synthetase beta subunit family. Type 1 subfamily. In terms of assembly, tetramer of two alpha and two beta subunits. Requires Mg(2+) as cofactor.

Its subcellular location is the cytoplasm. It carries out the reaction tRNA(Phe) + L-phenylalanine + ATP = L-phenylalanyl-tRNA(Phe) + AMP + diphosphate + H(+). The protein is Phenylalanine--tRNA ligase beta subunit of Neisseria gonorrhoeae (strain ATCC 700825 / FA 1090).